The following is a 148-amino-acid chain: Large-conductance mechanosensitive channel (148 aa).

2 helical membrane passes run 9–29 (AFAV…GAAF) and 79–99 (IQTV…VKAI).

The protein belongs to the MscL family. Homopentamer.

The protein resides in the cell inner membrane. Functionally, channel that opens in response to stretch forces in the membrane lipid bilayer. May participate in the regulation of osmotic pressure changes within the cell. The protein is Large-conductance mechanosensitive channel of Pseudomonas syringae pv. tomato (strain ATCC BAA-871 / DC3000).